The following is a 217-amino-acid chain: Spore coat protein F-like protein YhcQ (217 aa).

Over residues 1–11 the composition is skewed to low complexity; it reads MDQFNQQQQSQ. Positions 1–28 are disordered; the sequence is MDQFNQQQQSQMNKGIPGKPHKNHGGHE.

It belongs to the CotF family.

The protein resides in the spore coat. The protein is Spore coat protein F-like protein YhcQ (yhcQ) of Bacillus subtilis (strain 168).